The primary structure comprises 582 residues: Hemagglutinin-neuraminidase (582 aa).

Residues 1–34 (MEPSKLFTISDNATFAPGPVNNAADKKTFRTCFR) lie on the Intravirion side of the membrane. The helical; Signal-anchor for type II membrane protein transmembrane segment at 35–55 (ILVLSVQAVTLILVIVTLGEL) threads the bilayer. The Virion surface segment spans residues 56–582 (VRMINDQGLS…LPVLTRLTIT (527 aa)). A glycan (N-linked (GlcNAc...) asparagine; by host) is linked at Asn-127. 3 cysteine pairs are disulfide-bonded: Cys-178–Cys-202, Cys-192–Cys-253, and Cys-244–Cys-257. An involved in neuraminidase activity region spans residues 240-245 (NRKSCS). Asn-284 and Asn-329 each carry an N-linked (GlcNAc...) asparagine; by host glycan. Intrachain disulfides connect Cys-350-Cys-471, Cys-382-Cys-392, and Cys-465-Cys-475. N-linked (GlcNAc...) asparagine; by host glycans are attached at residues Asn-400 and Asn-448. The N-linked (GlcNAc...) asparagine; by host glycan is linked to Asn-507. A disulfide bond links Cys-545 and Cys-556.

The protein belongs to the paramyxoviruses hemagglutinin-neuraminidase family. Homotetramer; composed of disulfide-linked homodimers. Interacts with F protein trimer.

The protein localises to the virion membrane. The protein resides in the host cell membrane. The enzyme catalyses Hydrolysis of alpha-(2-&gt;3)-, alpha-(2-&gt;6)-, alpha-(2-&gt;8)- glycosidic linkages of terminal sialic acid residues in oligosaccharides, glycoproteins, glycolipids, colominic acid and synthetic substrates.. In terms of biological role, attaches the virus to alpha-2,3-linked sialic acid-containing cell receptors and thereby initiating infection. Binding of HN protein to the receptor induces a conformational change that allows the F protein to trigger virion/cell membranes fusion. Binds to the glycan motifs sialyl Lewis (SLe) and GM2 ganglioside (GM2-glycan). Functionally, neuraminidase activity ensures the efficient spread of the virus by dissociating the mature virions from the neuraminic acid containing glycoproteins. The polypeptide is Hemagglutinin-neuraminidase (HN) (Mumps virus (strain RW) (MuV)).